The primary structure comprises 1420 residues: ABC transporter G family member 32 (1420 aa).

The 274-residue stretch at 135–408 folds into the ABC transporter 1 domain; that stretch reads LRNIHVIGGK…FSSLGFTCPD (274 aa). An ATP-binding site is contributed by 168 to 175; that stretch reads GPPSSGKT. An ABC transmembrane type-2 1 domain is found at 486-699; sequence ELLKINFAWQ…AQNAASVNEF (214 aa). The next 7 membrane-spanning stretches (helical) occupy residues 504–524, 544–564, 585–605, 623–643, 648–668, 674–694, and 735–755; these read FIYV…MTVF, LYFS…MLVA, LPSW…WVAV, FLLY…MGSL, IVAN…GGFI, IPSW…QNAA, and IGVA…TLFL. An ABC transporter 2 domain is found at 818–1070; the sequence is LSFSNINYYV…ELIKYFESIE (253 aa). 863–870 lines the ATP pocket; the sequence is GVSGAGKT. The 215-residue stretch at 1143–1357 folds into the ABC transmembrane type-2 2 domain; it reads SQFVACLWKQ…TLYGLLVSQY (215 aa). The next 7 membrane-spanning stretches (helical) occupy residues 1162 to 1182, 1202 to 1222, 1235 to 1255, 1277 to 1297, 1307 to 1327, 1334 to 1354, and 1392 to 1412; these read YTAV…TICW, YAAV…VVSI, MYSA…YVLA, FLWY…YGMM, VASI…GFMI, LWWR…GLLV, and VSAI…AFAI.

It belongs to the ABC transporter superfamily. ABCG family. PDR (TC 3.A.1.205) subfamily. In terms of tissue distribution, ubiquitous in aerial organs. Higher expression levels in young, expanding tissues than in older tissues. Detected in the epidermal layer.

It is found in the cell membrane. Its function is as follows. May be a general defense protein. Required for the formation of the cuticle layer of the cell wall. The polypeptide is ABC transporter G family member 32 (Arabidopsis thaliana (Mouse-ear cress)).